The chain runs to 155 residues: MRLRLIAVGSRMPKWVEEGWHEYAKRLPSELALELVEIPLNTRGKNADVARLIRQEGEAMLSKVQPGERIVTLEVHGKPWSTEQLAGELDRWRLDARTVNLMVGGPEGLAPEVCARSEQRWSLSPLTLPHPLVRILIGEQIYRAWTVLSGHPYHK.

Residues L73, G104, and L123 to L128 contribute to the S-adenosyl-L-methionine site.

The protein belongs to the RNA methyltransferase RlmH family. In terms of assembly, homodimer.

Its subcellular location is the cytoplasm. It carries out the reaction pseudouridine(1915) in 23S rRNA + S-adenosyl-L-methionine = N(3)-methylpseudouridine(1915) in 23S rRNA + S-adenosyl-L-homocysteine + H(+). Functionally, specifically methylates the pseudouridine at position 1915 (m3Psi1915) in 23S rRNA. The chain is Ribosomal RNA large subunit methyltransferase H from Pseudomonas entomophila (strain L48).